The primary structure comprises 224 residues: Ankyrin repeat domain-containing protein 45 (224 aa).

ANK repeat units lie at residues 46-76 (VGRN…DVNE) and 80-109 (RGYS…DFQA).

Widely expressed.

It localises to the cytoplasm. The protein resides in the midbody. Its subcellular location is the midbody ring. The protein localises to the cleavage furrow. In terms of biological role, may play a role during cell division. The chain is Ankyrin repeat domain-containing protein 45 from Danio rerio (Zebrafish).